A 1036-amino-acid chain; its full sequence is Exportin-T (1036 aa).

Belongs to the exportin family.

Its subcellular location is the nucleus. It localises to the cytoplasm. In terms of biological role, tRNA nucleus export receptor which facilitates tRNA translocation across the nuclear pore complex. Involved in pre-tRNA splicing, probably by affecting the interaction of pre-tRNA with splicing endonuclease. The chain is Exportin-T (LOS1) from Phaeosphaeria nodorum (strain SN15 / ATCC MYA-4574 / FGSC 10173) (Glume blotch fungus).